Reading from the N-terminus, the 176-residue chain is Peptide deformylase 2 (176 aa).

Residues cysteine 99 and histidine 141 each coordinate Fe cation. The active site involves glutamate 142. Histidine 145 serves as a coordination point for Fe cation.

This sequence belongs to the polypeptide deformylase family. Requires Fe(2+) as cofactor.

The enzyme catalyses N-terminal N-formyl-L-methionyl-[peptide] + H2O = N-terminal L-methionyl-[peptide] + formate. Functionally, removes the formyl group from the N-terminal Met of newly synthesized proteins. Requires at least a dipeptide for an efficient rate of reaction. N-terminal L-methionine is a prerequisite for activity but the enzyme has broad specificity at other positions. The chain is Peptide deformylase 2 from Bordetella bronchiseptica (strain ATCC BAA-588 / NCTC 13252 / RB50) (Alcaligenes bronchisepticus).